The primary structure comprises 956 residues: Calsyntenin-3 (956 aa).

A signal peptide spans 1–19 (MTLLLVSLLLASLLQISSG). Over 1 to 21 (MTLLLVSLLLASLLQISSGNK) the chain is Cytoplasmic. Residues 20–847 (NKANKHKPWI…SHRNSMVPSA (828 aa)) lie on the Extracellular side of the membrane. The segment at residues 22 to 42 (ANKHKPWIEAEYQGIVMENDN) is an intramembrane region (helical). Cadherin domains lie at 29 to 145 (IEAE…APVF) and 146 to 246 (VERL…KPSW). At 43-73 (TVLLNPPLFALDKDAPLRYAGEICGFRLHGS) the chain is on the cytoplasmic side. Positions 74 to 94 (GVPFEAVILDKATGEGLIRAK) form an intramembrane region, helical. The Cytoplasmic portion of the chain corresponds to 95 to 139 (EPVDCEAQKEHTFTIQAYDCGEGPDGTNTKKSHKATVHVRVNDVN). Positions 140-160 (EFAPVFVERLYRAAVTEGKLY) form an intramembrane region, helical. The Cytoplasmic portion of the chain corresponds to 161–248 (DRILRVEAID…KPTCKPSWQG (88 aa)). The chain crosses the membrane as a helical span at residues 249–269 (WNKRIEYAPGAGSLALFPGIR). Over 270-357 (LETCDEPLWN…GTQAVQVPLG (88 aa)) the chain is Lumenal. 5 N-linked (GlcNAc...) asparagine glycosylation sites follow: Asn-299, Asn-327, Asn-347, Asn-507, and Asn-740. Residues 848 to 868 (ATLIIVVCVGFLVLMVILGLV) form a helical membrane-spanning segment. The Cytoplasmic segment spans residues 869–956 (RIHSLHRRVS…RIIESPPHRY (88 aa)). The disordered stretch occupies residues 916 to 956 (QTCVAGVAGGQQEEEDSSDSEAADSPSSDERRIIESPPHRY). Residues 927-937 (QEEEDSSDSEA) show a composition bias toward acidic residues. The span at 943 to 956 (SDERRIIESPPHRY) shows a compositional bias: basic and acidic residues.

Belongs to the calsyntenin family. In terms of assembly, interacts (via cadherin domains) with both alpha and beta isoforms of neurexins (NRXN1, NRXN2 and NRXN3). Directly interacts with APBA2. Forms a tripartite complex with APBA2 and APP. Interacts with low affinity with KLC1. Interacts with SLC23A2/SVCT2. As to quaternary structure, interacts with CIDEA; inhibiting the lipid transferase activity of CIDEA. Interacts with CIDEC; inhibiting the lipid transferase activity of CIDEC. Post-translationally, proteolytically processed under normal cellular conditions. A primary zeta-cleavage generates a large extracellular (soluble) N-terminal domain (sAlc) and a short C-terminal transmembrane fragment (CTF1). A secondary cleavage catalyzed by gamma-secretase within the transmembrane domain releases the beta-Alc-beta chain in the extracellular milieu and produces an intracellular fragment (AlcICD). This processing is strongly suppressed in the tripartite complex formed with APBA2 and APP, which seems to prevent the association with gamma-secretase. In terms of processing, ubiquitinated: endoplasmic reticulum-localized protein is ubiquitinated and degraded by the endoplasmic reticulum-associated degradation (ERAD) pathway. Restricted to the brain (at protein level). In the cerebral cortex, found in the somas and neuropil of all layers. Expressed at highest levels in neurons of cortical layer 5 and, at lower levels, in neurons of the upper layers. Highly expressed in Purkinje cells. Also found in a few scattered interneurons throughout the granule cell layer and occasionally in neurons in the molecular layer (at protein level). In all layers, high levels in a subpopulation of presumptive GABAergic neurons (based on morphology). As to expression, expression is restricted to adipose tissue, with high expression in thermogenic adipocytes (brown adipose tissue).

Its subcellular location is the postsynaptic cell membrane. It localises to the endoplasmic reticulum membrane. The protein resides in the golgi apparatus membrane. It is found in the cell projection. The protein localises to the dendrite. Its subcellular location is the lipid droplet. Postsynaptic adhesion molecule that binds to presynaptic neurexins to mediate both excitatory and inhibitory synapse formation. Promotes synapse development by acting as a cell adhesion molecule at the postsynaptic membrane, which associates with both neurexin-alpha and neurexin-beta proteins at the presynaptic membrane. Regulates the balance between excitatory and inhibitory synapses by inhibiting formation of excitatory parallel-fiber synapses and promoting formation of inhibitory synapses in the same neuron. May also be involved in ascorbate (vitamin C) uptake via its interaction with SLC23A2/SVCT2. Complex formation with APBA2 and APP, stabilizes APP metabolism and enhances APBA2-mediated suppression of beta-APP40 secretion, due to the retardation of intracellular APP maturation. Functionally, adipose-specific isoform that plays a key role in adaptive thermogenesis. Facilitates the efficient use of stored triglyceride by promoting multilocular morphology of thermogenic adipocytes: acts by inhibiting the activity of CIDEA and CIDEC on lipid droplets, thereby preventing lipid droplet fusion and facilitating lipid utilization. May also participate in adaptive thermogenesis by promoting sympathetic innervation of thermogenic adipose tissue: acts by driving secretion of neurotrophic factor S100B from brown adipocytes, stimulating neurite outgrowth from sympathetic neurons. In Mus musculus (Mouse), this protein is Calsyntenin-3.